We begin with the raw amino-acid sequence, 101 residues long: Small ribosomal subunit protein uS14 (101 aa).

It belongs to the universal ribosomal protein uS14 family. Part of the 30S ribosomal subunit. Contacts proteins S3 and S10.

In terms of biological role, binds 16S rRNA, required for the assembly of 30S particles and may also be responsible for determining the conformation of the 16S rRNA at the A site. This chain is Small ribosomal subunit protein uS14, found in Burkholderia lata (strain ATCC 17760 / DSM 23089 / LMG 22485 / NCIMB 9086 / R18194 / 383).